The sequence spans 875 residues: Alanine--tRNA ligase (875 aa).

H564, H568, C666, and H670 together coordinate Zn(2+).

The protein belongs to the class-II aminoacyl-tRNA synthetase family. In terms of assembly, homotetramer. It depends on Zn(2+) as a cofactor.

It is found in the cytoplasm. It catalyses the reaction tRNA(Ala) + L-alanine + ATP = L-alanyl-tRNA(Ala) + AMP + diphosphate. In terms of biological role, catalyzes the attachment of alanine to tRNA(Ala) in a two-step reaction: alanine is first activated by ATP to form Ala-AMP and then transferred to the acceptor end of tRNA(Ala). Also edits incorrectly charged Ser-tRNA(Ala) and Gly-tRNA(Ala) via its editing domain. The protein is Alanine--tRNA ligase of Yersinia enterocolitica serotype O:8 / biotype 1B (strain NCTC 13174 / 8081).